Reading from the N-terminus, the 734-residue chain is Photosystem I P700 chlorophyll a apoprotein A2 (734 aa).

8 helical membrane-spanning segments follow: residues 46–69, 135–158, 175–199, 273–291, 330–353, 369–395, 417–439, and 517–535; these read IFAS…FHVA, LYTG…LHLQ, LNHH…HVAI, MAHH…GHMY, IHFQ…QHMY, AALY…IFFI, AIIS…LYVH, and FLVH…LILV. Residues Cys559 and Cys568 each contribute to the [4Fe-4S] cluster site. The next 2 membrane-spanning stretches (helical) occupy residues 575 to 596 and 643 to 665; these read AFYL…YWHW and LSVW…MFLI. 3 residues coordinate chlorophyll a: His654, Met662, and Tyr670. Phylloquinone is bound at residue Trp671. Residues 707-727 traverse the membrane as a helical segment; it reads LVGLAHFSVGYIFTYAAFLIA.

The protein belongs to the PsaA/PsaB family. As to quaternary structure, the PsaA/B heterodimer binds the P700 chlorophyll special pair and subsequent electron acceptors. PSI consists of a core antenna complex that captures photons, and an electron transfer chain that converts photonic excitation into a charge separation. The eukaryotic PSI reaction center is composed of at least 11 subunits. It depends on P700 is a chlorophyll a/chlorophyll a' dimer, A0 is one or more chlorophyll a, A1 is one or both phylloquinones and FX is a shared 4Fe-4S iron-sulfur center. as a cofactor.

The protein localises to the plastid. It is found in the chloroplast thylakoid membrane. The enzyme catalyses reduced [plastocyanin] + hnu + oxidized [2Fe-2S]-[ferredoxin] = oxidized [plastocyanin] + reduced [2Fe-2S]-[ferredoxin]. In terms of biological role, psaA and PsaB bind P700, the primary electron donor of photosystem I (PSI), as well as the electron acceptors A0, A1 and FX. PSI is a plastocyanin-ferredoxin oxidoreductase, converting photonic excitation into a charge separation, which transfers an electron from the donor P700 chlorophyll pair to the spectroscopically characterized acceptors A0, A1, FX, FA and FB in turn. Oxidized P700 is reduced on the lumenal side of the thylakoid membrane by plastocyanin. The polypeptide is Photosystem I P700 chlorophyll a apoprotein A2 (Helianthus annuus (Common sunflower)).